Reading from the N-terminus, the 261-residue chain is Cytochrome c oxidase subunit 3 (261 aa).

Over 1–15 (MTHQTHAYHMVNPSP) the chain is Mitochondrial matrix. A helical transmembrane segment spans residues 16-34 (WPLTGALSALLMTSGLIMW). Topologically, residues 35–40 (FHFNST) are mitochondrial intermembrane. A helical transmembrane segment spans residues 41 to 66 (TLLMLGLTTNMLTMYQWWRDVVREST). Residues 67 to 72 (FQGHHT) are Mitochondrial matrix-facing. The chain crosses the membrane as a helical span at residues 73–105 (PNVQKGLRYGMILFIISEVLFFTGFFWAFYHSS). The Mitochondrial intermembrane segment spans residues 106 to 128 (LAPTPELGGCWPPTGIHPLNPLE). Residues 129–152 (VPLLNTSVLLASGVSITWAHHSLM) form a helical membrane-spanning segment. At 153–155 (EGN) the chain is on the mitochondrial matrix side. Residues 156-183 (RNHMLQALFITIALGVYFTLLQASEYYE) form a helical membrane-spanning segment. The Mitochondrial intermembrane segment spans residues 184-190 (APFTISD). The chain crosses the membrane as a helical span at residues 191–223 (GVYGSTFFVATGFHGLHVIIGSTFLIVCFFRQL). Residues 224–232 (KFHFTSSHH) are Mitochondrial matrix-facing. Residues 233–256 (FGFEAAAWYWHFVDVVWLFLYVSI) traverse the membrane as a helical segment. Topologically, residues 257–261 (YWWGS) are mitochondrial intermembrane.

This sequence belongs to the cytochrome c oxidase subunit 3 family. In terms of assembly, component of the cytochrome c oxidase (complex IV, CIV), a multisubunit enzyme composed of 14 subunits. The complex is composed of a catalytic core of 3 subunits MT-CO1, MT-CO2 and MT-CO3, encoded in the mitochondrial DNA, and 11 supernumerary subunits COX4I, COX5A, COX5B, COX6A, COX6B, COX6C, COX7A, COX7B, COX7C, COX8 and NDUFA4, which are encoded in the nuclear genome. The complex exists as a monomer or a dimer and forms supercomplexes (SCs) in the inner mitochondrial membrane with NADH-ubiquinone oxidoreductase (complex I, CI) and ubiquinol-cytochrome c oxidoreductase (cytochrome b-c1 complex, complex III, CIII), resulting in different assemblies (supercomplex SCI(1)III(2)IV(1) and megacomplex MCI(2)III(2)IV(2)).

It is found in the mitochondrion inner membrane. The catalysed reaction is 4 Fe(II)-[cytochrome c] + O2 + 8 H(+)(in) = 4 Fe(III)-[cytochrome c] + 2 H2O + 4 H(+)(out). Component of the cytochrome c oxidase, the last enzyme in the mitochondrial electron transport chain which drives oxidative phosphorylation. The respiratory chain contains 3 multisubunit complexes succinate dehydrogenase (complex II, CII), ubiquinol-cytochrome c oxidoreductase (cytochrome b-c1 complex, complex III, CIII) and cytochrome c oxidase (complex IV, CIV), that cooperate to transfer electrons derived from NADH and succinate to molecular oxygen, creating an electrochemical gradient over the inner membrane that drives transmembrane transport and the ATP synthase. Cytochrome c oxidase is the component of the respiratory chain that catalyzes the reduction of oxygen to water. Electrons originating from reduced cytochrome c in the intermembrane space (IMS) are transferred via the dinuclear copper A center (CU(A)) of subunit 2 and heme A of subunit 1 to the active site in subunit 1, a binuclear center (BNC) formed by heme A3 and copper B (CU(B)). The BNC reduces molecular oxygen to 2 water molecules using 4 electrons from cytochrome c in the IMS and 4 protons from the mitochondrial matrix. This is Cytochrome c oxidase subunit 3 (MT-CO3) from Gazella spekei (Speke's gazelle).